We begin with the raw amino-acid sequence, 212 residues long: Large ribosomal subunit protein uL3 (212 aa).

N5-methylglutamine is present on Gln153.

This sequence belongs to the universal ribosomal protein uL3 family. In terms of assembly, part of the 50S ribosomal subunit. Forms a cluster with proteins L14 and L19. Post-translationally, methylated by PrmB.

One of the primary rRNA binding proteins, it binds directly near the 3'-end of the 23S rRNA, where it nucleates assembly of the 50S subunit. The chain is Large ribosomal subunit protein uL3 from Idiomarina loihiensis (strain ATCC BAA-735 / DSM 15497 / L2-TR).